Reading from the N-terminus, the 149-residue chain is Large ribosomal subunit protein uL15C (149 aa).

The interval 21–40 (RIGKHRKQRGGRGNAGGQHH) is disordered.

It belongs to the universal ribosomal protein uL15 family. As to quaternary structure, component of the large ribosomal subunit.

The protein resides in the cytoplasm. The protein localises to the cytosol. It is found in the endoplasmic reticulum. Its function is as follows. Component of the large ribosomal subunit. The ribosome is a large ribonucleoprotein complex responsible for the synthesis of proteins in the cell. This chain is Large ribosomal subunit protein uL15C (rpl27a-3), found in Entamoeba histolytica (strain ATCC 30459 / HM-1:IMSS / ABRM).